Consider the following 226-residue polypeptide: Transcriptional activator plp-1 (226 aa).

The protein belongs to the PUR DNA-binding protein family.

The protein localises to the nucleus. Its subcellular location is the chromosome. Probable transcription activator. Binds telomeric DNA containing repeats of the sequence, 5'-TTAGGC-3'. Binds to end-1 promoter, activating end-1 expression, which is required for endoderm specification during embryonic development. The protein is Transcriptional activator plp-1 of Caenorhabditis elegans.